Consider the following 153-residue polypeptide: Pheromone-binding protein Gp-9 (153 aa).

The N-terminal stretch at 1-19 is a signal peptide; it reads MKTLILHICIFALVAFASA. Cystine bridges form between Cys37–Cys77, Cys73–Cys129, and Cys118–Cys138.

It belongs to the PBP/GOBP family. As to quaternary structure, homodimer.

Its subcellular location is the secreted. In terms of biological role, colony queen number, a major feature of social organization, is associated with worker genotype for Gp-9. Colonies are headed by either a single reproductive queen (monogyne form) or multiple queens (polygyne form). Differences in worker Gp-9 genotypes between social forms may cause differences in workers' abilities to recognize queens and regulate their numbers. The polypeptide is Pheromone-binding protein Gp-9 (Solenopsis nigella gensterblumi (Fire ant)).